Reading from the N-terminus, the 325-residue chain is NADH-quinone oxidoreductase subunit H (325 aa).

A run of 8 helical transmembrane segments spans residues 11-31 (ILIS…CGAF), 81-101 (AIFT…FAIV), 114-134 (IGIL…LFAG), 154-174 (LSYE…VGSF), 186-206 (VWNV…GVAV), 237-257 (FFVG…TLFF), 265-285 (LPPF…FILI), and 304-324 (VCLP…LYNA).

It belongs to the complex I subunit 1 family. NDH-1 is composed of 13 different subunits. Subunits NuoA, H, J, K, L, M, N constitute the membrane sector of the complex.

It localises to the cell inner membrane. It catalyses the reaction a quinone + NADH + 5 H(+)(in) = a quinol + NAD(+) + 4 H(+)(out). Its function is as follows. NDH-1 shuttles electrons from NADH, via FMN and iron-sulfur (Fe-S) centers, to quinones in the respiratory chain. The immediate electron acceptor for the enzyme in this species is believed to be ubiquinone. Couples the redox reaction to proton translocation (for every two electrons transferred, four hydrogen ions are translocated across the cytoplasmic membrane), and thus conserves the redox energy in a proton gradient. This subunit may bind ubiquinone. The protein is NADH-quinone oxidoreductase subunit H of Yersinia pseudotuberculosis serotype O:3 (strain YPIII).